We begin with the raw amino-acid sequence, 350 residues long: FAD:protein FMN transferase (350 aa).

The N-terminal stretch at 1 to 19 is a signal peptide; it reads MKMTFCRAVCLAAAFLLMG. The N-palmitoyl cysteine moiety is linked to residue cysteine 20. Cysteine 20 carries the S-diacylglycerol cysteine lipid modification. FAD contacts are provided by residues methionine 41, tyrosine 78, 119–121, and aspartate 181; that span reads AMD. Mg(2+) is bound at residue threonine 184. Positions 187 and 272 each coordinate FAD. The Mg(2+) site is built by aspartate 298, aspartate 301, and threonine 302.

This sequence belongs to the ApbE family. As to quaternary structure, homodimer. The cofactor is Mg(2+).

Its subcellular location is the cell inner membrane. The catalysed reaction is L-threonyl-[protein] + FAD = FMN-L-threonyl-[protein] + AMP + H(+). Flavin transferase that catalyzes the transfer of the FMN moiety of FAD and its covalent binding to the hydroxyl group of a threonine residue in a target flavoprotein such as NqrB and NqrC, two subunits of the NQR complex. The chain is FAD:protein FMN transferase from Salmonella typhimurium (strain LT2 / SGSC1412 / ATCC 700720).